Reading from the N-terminus, the 465-residue chain is Apolipoprotein N-acyltransferase (465 aa).

6 helical membrane passes run 12–32, 49–69, 80–100, 122–142, 161–181, and 189–209; these read AVLG…LSML, ALWG…LHPL, LPVA…LLLL, LLAL…LFWI, WLGS…LWQL, and CAWW…SLSP. One can recognise a CN hydrolase domain in the interval 221–448; that stretch reads WQPAIPTREK…DAVAAAELQR (228 aa). E262 serves as the catalytic Proton acceptor. Residue K312 is part of the active site. The active-site Nucleophile is the C360.

It belongs to the CN hydrolase family. Apolipoprotein N-acyltransferase subfamily.

The protein localises to the cell inner membrane. The catalysed reaction is N-terminal S-1,2-diacyl-sn-glyceryl-L-cysteinyl-[lipoprotein] + a glycerophospholipid = N-acyl-S-1,2-diacyl-sn-glyceryl-L-cysteinyl-[lipoprotein] + a 2-acyl-sn-glycero-3-phospholipid + H(+). Its pathway is protein modification; lipoprotein biosynthesis (N-acyl transfer). In terms of biological role, catalyzes the phospholipid dependent N-acylation of the N-terminal cysteine of apolipoprotein, the last step in lipoprotein maturation. The chain is Apolipoprotein N-acyltransferase from Parasynechococcus marenigrum (strain WH8102).